The following is a 294-amino-acid chain: ATP phosphoribosyltransferase (294 aa).

The protein belongs to the ATP phosphoribosyltransferase family. Long subfamily. The cofactor is Mg(2+).

It localises to the cytoplasm. It carries out the reaction 1-(5-phospho-beta-D-ribosyl)-ATP + diphosphate = 5-phospho-alpha-D-ribose 1-diphosphate + ATP. The protein operates within amino-acid biosynthesis; L-histidine biosynthesis; L-histidine from 5-phospho-alpha-D-ribose 1-diphosphate: step 1/9. With respect to regulation, feedback inhibited by histidine. Its function is as follows. Catalyzes the condensation of ATP and 5-phosphoribose 1-diphosphate to form N'-(5'-phosphoribosyl)-ATP (PR-ATP). Has a crucial role in the pathway because the rate of histidine biosynthesis seems to be controlled primarily by regulation of HisG enzymatic activity. The chain is ATP phosphoribosyltransferase from Maricaulis maris (strain MCS10) (Caulobacter maris).